The following is a 173-amino-acid chain: MSMSANTMIFMILGASIVMAIACLMDMNALLDRFHNYILPHLRGEDRVCHCNCGRHHIHYVIPYDGDQSVVDASENYFVTDNVTKQEIDLMLGLLLGFCISWFLVWMDGVLHCAVRAWRAGRRYDGSWTWLPKLCSLRELGRRPHRPFEEPTGNMVHVKQKLYHNGHPSPRHL.

Transmembrane regions (helical) follow at residues 5–25 (ANTM…ACLM) and 90–110 (LMLG…MDGV). A Phosphoserine modification is found at S169.

It is found in the synapse. It localises to the cell membrane. In Mus musculus (Mouse), this protein is Transmembrane protein 240 (Tmem240).